A 408-amino-acid polypeptide reads, in one-letter code: Peptidase T (408 aa).

A Zn(2+)-binding site is contributed by histidine 81. Aspartate 83 is a catalytic residue. Aspartate 142 lines the Zn(2+) pocket. The Proton acceptor role is filled by glutamate 176. The Zn(2+) site is built by glutamate 177, aspartate 199, and histidine 381.

Belongs to the peptidase M20B family. Zn(2+) serves as cofactor.

It localises to the cytoplasm. The enzyme catalyses Release of the N-terminal residue from a tripeptide.. Cleaves the N-terminal amino acid of tripeptides. The polypeptide is Peptidase T (Streptococcus gordonii (strain Challis / ATCC 35105 / BCRC 15272 / CH1 / DL1 / V288)).